Consider the following 438-residue polypeptide: MEHAATTGPRPGPPSRRVENVVLRAKDWLPGAPGGTAVWATSLEAEVPPDLALNKEQQLQISKELVDIQITTHHLHEQHEAEIFQLKSEILRLESRVLELELRGDGTSQGCAVPVESDPRHPRAAAQELRHKAQVPGHSDDHRFQVQPKNTMNPENEQHRLGSGLQGEVKWALEHQEARQQALVTRVATLGRQLQGAREEARAAGQRLATQAVVLCSCQGQLRQAEAENARLQLQLKKLKDEYVLRLQHCAWQAVEHADGAGQAPATTALRTFLEATLEDIRAAHRSREQQLARAARSYHKRLVDLSRRHEELLVAYRAPGNPQAIFDIASLDLEPLPVPLVTDFSHREDQHGGPGALLSSPKKRPGGASQGGTSEPQGLDAASWAQIHQKLRDFSRSTQSWNGSGHSCWSGPRWLKSNFLSYRSTWTSTWAGTSTKS.

Coiled coils occupy residues 74–105 (HLHE…LRGD) and 217–246 (SCQG…YVLR). The interval 345–381 (FSHREDQHGGPGALLSSPKKRPGGASQGGTSEPQGLD) is disordered.

Belongs to the CCDC78 family. As to expression, expressed primarily in skeletal muscle.

Its subcellular location is the cytoplasm. The protein resides in the cytoskeleton. It localises to the microtubule organizing center. The protein localises to the centrosome. It is found in the centriole. Its subcellular location is the perinuclear region. The protein resides in the cell membrane. It localises to the sarcolemma. The protein localises to the sarcoplasmic reticulum. In terms of biological role, component of the deuterosome, a structure that promotes de novo centriole amplification in multiciliated cells that can generate more than 100 centrioles. Deuterosome-mediated centriole amplification occurs in terminally differentiated multiciliated cells (G1/0) and not in S phase. Essential for centriole amplification and is required for CEP152 localization to the deuterosome. The protein is Coiled-coil domain-containing protein 78 (CCDC78) of Homo sapiens (Human).